The chain runs to 316 residues: Thymidylate synthase (316 aa).

Residues R23 and 178 to 179 (RR) contribute to the dUMP site. C198 functions as the Nucleophile in the catalytic mechanism. Residues 218–221 (RSAD), N229, and 259–261 (HIY) each bind dUMP. D221 contributes to the (6R)-5,10-methylene-5,6,7,8-tetrahydrofolate binding site. A (6R)-5,10-methylene-5,6,7,8-tetrahydrofolate-binding site is contributed by A315.

This sequence belongs to the thymidylate synthase family. Bacterial-type ThyA subfamily. In terms of assembly, homodimer.

The protein localises to the cytoplasm. It catalyses the reaction dUMP + (6R)-5,10-methylene-5,6,7,8-tetrahydrofolate = 7,8-dihydrofolate + dTMP. Its pathway is pyrimidine metabolism; dTTP biosynthesis. Its function is as follows. Catalyzes the reductive methylation of 2'-deoxyuridine-5'-monophosphate (dUMP) to 2'-deoxythymidine-5'-monophosphate (dTMP) while utilizing 5,10-methylenetetrahydrofolate (mTHF) as the methyl donor and reductant in the reaction, yielding dihydrofolate (DHF) as a by-product. This enzymatic reaction provides an intracellular de novo source of dTMP, an essential precursor for DNA biosynthesis. The polypeptide is Thymidylate synthase (Levilactobacillus brevis (strain ATCC 367 / BCRC 12310 / CIP 105137 / JCM 1170 / LMG 11437 / NCIMB 947 / NCTC 947) (Lactobacillus brevis)).